The following is a 638-amino-acid chain: Pentatricopeptide repeat-containing protein At3g49730 (638 aa).

PPR repeat units follow at residues 130–164, 166–200, 201–231, 235–269, 270–304, 305–340, 341–375, 376–410, 411–445, 446–480, 483–513, and 520–554; these read SYEVCKSMVMILSKMRQFGAVWGLIEEMRKTNPEL, EPELFVVLMRRFASANMVKKAVEVLDEMPKYGLEP, DEYVFGCLLDALCKNGSVKEASKVFEDMREK, NLRYFTSLLYGWCREGKLMEAKEVLVQMKEAGLEP, DIVVFTNLLSGYAHAGKMADAYDLMNDMRKRGFEP, NVNCYTVLIQALCRTEKRMDEAMRVFVEMERYGCEA, DIVTYTALISGFCKWGMIDKGYSVLDDMRKKGVMP, SQVTYMQIMVAHEKKEQFEECLELIEKMKRRGCHP, DLLIYNVVIRLACKLGEVKEAVRLWNEMEANGLSP, GVDTFVIMINGFTSQGFLIEACNHFKEMVSRGIFS, QYGTLKSLLNNLVRDDKLEMAKDVWSCISNK, and NVSAWTIWIHALYAKGHVKEACSYCLDMMEMDLMP. Residues 604 to 638 are disordered; the sequence is LIEKAKPKGNKEGKKKGTDHQRYKGRGERSRAKAL.

This sequence belongs to the PPR family. P subfamily.

In Arabidopsis thaliana (Mouse-ear cress), this protein is Pentatricopeptide repeat-containing protein At3g49730.